A 508-amino-acid chain; its full sequence is Photosystem II CP47 reaction center protein (508 aa).

Transmembrane regions (helical) follow at residues 21–36 (SVHLMHTALVSGWAGS), 101–115 (IVLSGLLFLASIWHW), 140–156 (GIHLFLSGLLCFGFGAF), 203–218 (IAAGILGILAGLFHLT), 237–252 (VLSSSIAAVFWAAFVV), and 457–472 (CFALLFFFGHIWHGAR).

Belongs to the PsbB/PsbC family. PsbB subfamily. PSII is composed of 1 copy each of membrane proteins PsbA, PsbB, PsbC, PsbD, PsbE, PsbF, PsbH, PsbI, PsbJ, PsbK, PsbL, PsbM, PsbT, PsbX, PsbY, PsbZ, Psb30/Ycf12, at least 3 peripheral proteins of the oxygen-evolving complex and a large number of cofactors. It forms dimeric complexes. Binds multiple chlorophylls. PSII binds additional chlorophylls, carotenoids and specific lipids. serves as cofactor.

It is found in the plastid. It localises to the chloroplast thylakoid membrane. In terms of biological role, one of the components of the core complex of photosystem II (PSII). It binds chlorophyll and helps catalyze the primary light-induced photochemical processes of PSII. PSII is a light-driven water:plastoquinone oxidoreductase, using light energy to abstract electrons from H(2)O, generating O(2) and a proton gradient subsequently used for ATP formation. This chain is Photosystem II CP47 reaction center protein, found in Chlorokybus atmophyticus (Soil alga).